A 126-amino-acid polypeptide reads, in one-letter code: Nascent polypeptide-associated complex protein (126 aa).

Residues 10–77 (PRMMKQMQKM…AKKVAKEEEK (68 aa)) form the NAC-A/B domain.

The protein belongs to the NAC-alpha family. As to quaternary structure, homodimer. Interacts with the ribosome. Binds ribosomal RNA.

In terms of biological role, contacts the emerging nascent chain on the ribosome. This chain is Nascent polypeptide-associated complex protein, found in Methanococcus maripaludis (strain DSM 14266 / JCM 13030 / NBRC 101832 / S2 / LL).